Reading from the N-terminus, the 206-residue chain is Ribonuclease HII (206 aa).

In terms of domain architecture, RNase H type-2 spans 19–206; that stretch reads ALIAGVDEVG…GPVKRALGIE (188 aa). A divalent metal cation-binding residues include Asp-25, Glu-26, and Asp-117.

The protein belongs to the RNase HII family. It depends on Mn(2+) as a cofactor. The cofactor is Mg(2+).

Its subcellular location is the cytoplasm. It catalyses the reaction Endonucleolytic cleavage to 5'-phosphomonoester.. Endonuclease that specifically degrades the RNA of RNA-DNA hybrids. The sequence is that of Ribonuclease HII from Vibrio cholerae serotype O1 (strain M66-2).